A 347-amino-acid chain; its full sequence is Heat-inducible transcription repressor HrcA (347 aa).

Belongs to the HrcA family.

In terms of biological role, negative regulator of class I heat shock genes (grpE-dnaK-dnaJ and groELS operons). Prevents heat-shock induction of these operons. The protein is Heat-inducible transcription repressor HrcA of Lactiplantibacillus plantarum (strain ATCC BAA-793 / NCIMB 8826 / WCFS1) (Lactobacillus plantarum).